The following is an 875-amino-acid chain: Alanine--tRNA ligase (875 aa).

Residues H564, H568, C666, and H670 each contribute to the Zn(2+) site.

The protein belongs to the class-II aminoacyl-tRNA synthetase family. As to quaternary structure, homotetramer. Zn(2+) serves as cofactor.

It is found in the cytoplasm. It carries out the reaction tRNA(Ala) + L-alanine + ATP = L-alanyl-tRNA(Ala) + AMP + diphosphate. Functionally, catalyzes the attachment of alanine to tRNA(Ala) in a two-step reaction: alanine is first activated by ATP to form Ala-AMP and then transferred to the acceptor end of tRNA(Ala). Also edits incorrectly charged Ser-tRNA(Ala) and Gly-tRNA(Ala) via its editing domain. The protein is Alanine--tRNA ligase of Yersinia pseudotuberculosis serotype IB (strain PB1/+).